A 239-amino-acid chain; its full sequence is 7-cyano-7-deazaguanine synthase (239 aa).

ATP is bound at residue 13 to 23 (FSGGQDSTTCL). Zn(2+) contacts are provided by cysteine 201, cysteine 216, cysteine 219, and cysteine 222.

The protein belongs to the QueC family. The cofactor is Zn(2+).

It catalyses the reaction 7-carboxy-7-deazaguanine + NH4(+) + ATP = 7-cyano-7-deazaguanine + ADP + phosphate + H2O + H(+). The protein operates within purine metabolism; 7-cyano-7-deazaguanine biosynthesis. Catalyzes the ATP-dependent conversion of 7-carboxy-7-deazaguanine (CDG) to 7-cyano-7-deazaguanine (preQ(0)). The sequence is that of 7-cyano-7-deazaguanine synthase from Bradyrhizobium sp. (strain BTAi1 / ATCC BAA-1182).